The primary structure comprises 188 residues: Translation machinery-associated protein 22 (188 aa).

The SUI1 domain maps to 96–167; it reads VTIKRIERNK…EIEEFLLEKY (72 aa).

Belongs to the DENR family. In terms of assembly, interacts with the 40S ribosomal subunit.

It localises to the cytoplasm. The chain is Translation machinery-associated protein 22 (TMA22) from Chaetomium globosum (strain ATCC 6205 / CBS 148.51 / DSM 1962 / NBRC 6347 / NRRL 1970) (Soil fungus).